Consider the following 288-residue polypeptide: UTP--glucose-1-phosphate uridylyltransferase (288 aa).

Belongs to the UDPGP type 2 family.

It catalyses the reaction alpha-D-glucose 1-phosphate + UTP + H(+) = UDP-alpha-D-glucose + diphosphate. It participates in glycolipid metabolism; diglucosyl-diacylglycerol biosynthesis. Catalyzes the formation of UDP-glucose from glucose-1-phosphate and UTP. This is an intermediate step in the biosynthesis of diglucosyl-diacylglycerol (Glc2-DAG), i.e. the predominant glycolipid found in the S.aureus membrane, which is also used as a membrane anchor for lipoteichoic acid (LTA). In Staphylococcus aureus (strain MSSA476), this protein is UTP--glucose-1-phosphate uridylyltransferase (gtaB).